We begin with the raw amino-acid sequence, 537 residues long: Cytochrome P450 734A5 (537 aa).

The helical transmembrane segment at 13–33 (GAAAVAVAAAAAWVAVYAAAA) threads the bilayer. Position 480 (cysteine 480) interacts with heme.

This sequence belongs to the cytochrome P450 family. Heme is required as a cofactor. In terms of tissue distribution, exclusively expressed in roots.

It is found in the membrane. Its function is as follows. Cytochrome P450 probably involved in brassinosteroids (BRs) inactivation and regulation of BRs homeostasis. In Oryza sativa subsp. japonica (Rice), this protein is Cytochrome P450 734A5 (CYP734A5).